We begin with the raw amino-acid sequence, 461 residues long: Cysteine--tRNA ligase (461 aa).

Position 30 (Cys30) interacts with Zn(2+). The 'HIGH' region motif lies at 32–42 (VTVYDLCHIGH). Cys211, His236, and Glu240 together coordinate Zn(2+). The short motif at 268-272 (KMSKS) is the 'KMSKS' region element. Lys271 serves as a coordination point for ATP.

Belongs to the class-I aminoacyl-tRNA synthetase family. Monomer. Requires Zn(2+) as cofactor.

It is found in the cytoplasm. The enzyme catalyses tRNA(Cys) + L-cysteine + ATP = L-cysteinyl-tRNA(Cys) + AMP + diphosphate. This is Cysteine--tRNA ligase from Shewanella sp. (strain ANA-3).